The primary structure comprises 294 residues: Probable 2-(5''-triphosphoribosyl)-3'-dephosphocoenzyme-A synthase (294 aa).

It belongs to the CitG/MdcB family.

It carries out the reaction 3'-dephospho-CoA + ATP = 2'-(5''-triphospho-alpha-D-ribosyl)-3'-dephospho-CoA + adenine. This is Probable 2-(5''-triphosphoribosyl)-3'-dephosphocoenzyme-A synthase from Streptococcus pyogenes serotype M5 (strain Manfredo).